The sequence spans 232 residues: Large ribosomal subunit protein uL1 (232 aa).

This sequence belongs to the universal ribosomal protein uL1 family. Part of the 50S ribosomal subunit.

Functionally, binds directly to 23S rRNA. The L1 stalk is quite mobile in the ribosome, and is involved in E site tRNA release. In terms of biological role, protein L1 is also a translational repressor protein, it controls the translation of the L11 operon by binding to its mRNA. This Burkholderia cenocepacia (strain HI2424) protein is Large ribosomal subunit protein uL1.